We begin with the raw amino-acid sequence, 55 residues long: Large ribosomal subunit protein bL33 (55 aa).

Positions 1–11 are enriched in basic and acidic residues; it reads MAKGGREKIKL. The interval 1–26 is disordered; it reads MAKGGREKIKLESTAGTGHFYTTDKN.

Belongs to the bacterial ribosomal protein bL33 family.

This is Large ribosomal subunit protein bL33 from Methylibium petroleiphilum (strain ATCC BAA-1232 / LMG 22953 / PM1).